We begin with the raw amino-acid sequence, 799 residues long: Pentatricopeptide repeat-containing protein At2g26790, mitochondrial (799 aa).

Residues 1-27 (MRFSPTFFLLSQLRLTRRRAATSSRFY) constitute a mitochondrion transit peptide. PPR repeat units follow at residues 145–179 (LIRV…DCVV), 180–214 (DIKA…GLCA), 215–250 (NEYT…GYKT), 251–278 (FING…KYLA), 282–316 (LRAV…GFGL), 317–351 (DVYA…GLKV), 352–386 (NCVI…NIFL), 387–421 (DRVC…GIVP), 422–456 (DVIN…GMSP), 457–491 (DLIT…GPKP), 492–522 (NAVT…LEQK), 523–553 (CPEN…LEYP), 555–589 (RKSV…RVEP), 590–624 (GRSM…GLIP), 625–659 (DLFT…GIKP), 660–695 (DVVT…KASE), 708–742 (DVVC…GLEP), and 743–777 (DMVA…YNIP).

The protein belongs to the PPR family. P subfamily.

The protein resides in the mitochondrion. In Arabidopsis thaliana (Mouse-ear cress), this protein is Pentatricopeptide repeat-containing protein At2g26790, mitochondrial.